The primary structure comprises 64 residues: Large ribosomal subunit protein uL29 (64 aa).

It belongs to the universal ribosomal protein uL29 family.

This is Large ribosomal subunit protein uL29 from Psychrobacter sp. (strain PRwf-1).